A 163-amino-acid chain; its full sequence is Nucleotide-binding protein APL_1231 (163 aa).

Belongs to the YajQ family.

In terms of biological role, nucleotide-binding protein. The protein is Nucleotide-binding protein APL_1231 of Actinobacillus pleuropneumoniae serotype 5b (strain L20).